We begin with the raw amino-acid sequence, 419 residues long: UDP-N-acetylglucosamine 1-carboxyvinyltransferase 2 (419 aa).

Phosphoenolpyruvate is bound at residue 24–25 (KN). A UDP-N-acetyl-alpha-D-glucosamine-binding site is contributed by Arg94. The active-site Proton donor is the Cys118. Cys118 carries the 2-(S-cysteinyl)pyruvic acid O-phosphothioketal modification. UDP-N-acetyl-alpha-D-glucosamine is bound by residues 123–127 (RPIDQ), Asp307, and Ile329.

Belongs to the EPSP synthase family. MurA subfamily.

Its subcellular location is the cytoplasm. The enzyme catalyses phosphoenolpyruvate + UDP-N-acetyl-alpha-D-glucosamine = UDP-N-acetyl-3-O-(1-carboxyvinyl)-alpha-D-glucosamine + phosphate. It functions in the pathway cell wall biogenesis; peptidoglycan biosynthesis. Functionally, cell wall formation. Adds enolpyruvyl to UDP-N-acetylglucosamine. This is UDP-N-acetylglucosamine 1-carboxyvinyltransferase 2 from Staphylococcus aureus (strain MRSA252).